Reading from the N-terminus, the 134-residue chain is Postmeiotic segregation increased 2-like protein 5 (134 aa).

This sequence belongs to the DNA mismatch repair MutL/HexB family.

This is Postmeiotic segregation increased 2-like protein 5 (PMS2P5) from Homo sapiens (Human).